The primary structure comprises 491 residues: MSARVLMVQGCTSDAGKSTLVAALCRWLHRQGIAVAPFKPQNMALNSAVTVDGGEIGRAQALQAQACGLDPQTDFNPVLLKPNSDTGAQVIVHGQPVATLDAVGYHAYKATAFKAVLASHERLVERFDVVLVEGAGSPAEINLRANDIANMGYAEAVDCAVILVADIDRGGVFAHLVGTLALLSASERARVAGVVINRFRGDLALLQPGLEWLERETGKPVLGVLPYLHGLQLDAEDAVPRNAPQKPQSQLRVVVPVLPRISNHTDIDALLAHPQVDVRLIGPGQTPPPCDLILLPGSKSTRHDLQWLRTHGWDAAIARHLRYGGKLLGICGGLQMLGTHLHDPDGIEGAAGSSPGLGWLPLQTTLQPHKQLHRVHGRLLLGDAGVSGYEIHCGISSGAALARPLLQLDDGRTDGAISDDGQVLGTYVHGVFDHPQALAALLAWAGLAQAAPLDLAALREASLERLADAVHTHLDTAALTRLISREAACST.

The GATase cobBQ-type domain occupies 250 to 437 (QLRVVVPVLP…VHGVFDHPQA (188 aa)). Cysteine 331 (nucleophile) is an active-site residue. Histidine 429 is an active-site residue.

Belongs to the CobB/CobQ family. CobQ subfamily.

The protein operates within cofactor biosynthesis; adenosylcobalamin biosynthesis. In terms of biological role, catalyzes amidations at positions B, D, E, and G on adenosylcobyrinic A,C-diamide. NH(2) groups are provided by glutamine, and one molecule of ATP is hydrogenolyzed for each amidation. The chain is Cobyric acid synthase from Xanthomonas axonopodis pv. citri (strain 306).